The primary structure comprises 1327 residues: MGSKGKKGKSSEVNLETSKNKEKNIKGKKKNSLDPIEKNKQETAGLQTTSRPTAKQLVGGSSWTGKIPVVLLNEHCQRSKWEKSDVKVRQTKSKNYIFTSVVLAKKDPKNPSILDHVSLIPPKSYYENGYFPEKETLVEARNVGAVYALHRIMSHKSLQHALPPEHRNIWFDMEKQKKEELKNKHSWLYNEDPFKAAKELQAARASSAAKPPPKASQKNEKVSLTSIKNTSLSHFSKFNFKYALPIHMSLENRRSLENLFRNMNTWDILEDTKNLEPDTSIVNDLISLGFRDIHAKEACQYCVSLEDALEWLIIHVPEDDLPTRFLPSDYTTGISVQNLNSANLAIHYNAKRISETGYSFDLCFSTLQTFENNIQISSEYLQQHLIGESFDGNISLEPNSTEWDDDVSALQSILDNKVSKIENGCRVRIDYPTSEFGELFVDFRRPARSYPAHIPLMSLSSTKRMASYIKLSILKKMVVYAMDLRGECMLSWLYNHLQENIEDFLQNIGSLLNISAATIGVSLSSQNKSAPTAKKNNSFKPKLFRRSRELSEKLCNNWSERVKSPSYQLKVREREKLPAWESRRKIMDAIQHSQVVVISGETGSGKSTQVVQFILDHYLSSGEKDLQTVVCTQPRRISAISLAERVAFERDTTVGKEVGYSVHGEKSISKETLLEFCTTGLLLRRIQQHGLGFLSTLSCVVVDEVHERSIENDILLTLLKLVISRIPNLKVILMSATVNSDTFKYYFGNAGHLHIHGRTFPIKDYYIEDFAPKLNEDDDEEDVPRRKKKEYEIDYHLISRLVSSIDAELGSSSGSILVFLPGVSNIARCIREIKSKDGSKFEVLPLHASLNTSEQRRCFKTYTKRKIICATNIAETSITIDDVVAVIDSGRVKQIDYDVERDLVTFKETWASRAACQQRRGRAGRVKKGICYKLYTRGFEEKGMLGQTPPEVLRTALSQVCLNVVPLVKRFSSAGNSVNQGSIKKFMNSLIDPPNDATVDLALKKLIQVGALTVSEDLTGLGEYLVSLPIDLKLGKLLVFGSIFGYLEPALTITAILSTKSPFLGDDEAREIRSKQSQGWGDVLADARVYHNWLEILETRGVKKTVQWCEEMHLHYTTLQQIRQNRNELSEAAQLLELTTKKLTGNFDWYSTENLTVLSTLIAAALSPNVVKCVYPDKKFVASFSGSLEMEQEARLTKFYDQNNQRLFIHPSSTMFVNSPNASRCTFVAYEQKVETTKPFLRNCTPINTYGMILLGANDILIDPLGKGLILDQAYCIKAWPKVVILLKMLKRCLDASLHERLESSSGLNYESEIHQCIRTLIAGNGV.

Disordered stretches follow at residues 1–58 (MGSK…KQLV) and 201–222 (QAAR…NEKV). The segment covering 18–41 (SKNKEKNIKGKKKNSLDPIEKNKQ) has biased composition (basic and acidic residues). Positions 42–58 (ETAGLQTTSRPTAKQLV) are enriched in polar residues. Residues 276–315 (EPDTSIVNDLISLGFRDIHAKEACQYCVSLEDALEWLIIH) enclose the UBA domain. The RWD domain occupies 405–504 (DDVSALQSIL…NHLQENIEDF (100 aa)). The 170-residue stretch at 587-756 (MDAIQHSQVV…FGNAGHLHIH (170 aa)) folds into the Helicase ATP-binding domain. 600–607 (GETGSGKS) is an ATP binding site. The short motif at 703-706 (DEVH) is the DEAH box element. The Helicase C-terminal domain maps to 797–968 (LISRLVSSID…QVCLNVVPLV (172 aa)).

Belongs to the DEAD box helicase family. DEAH subfamily.

The protein resides in the cytoplasm. It carries out the reaction ATP + H2O = ADP + phosphate + H(+). Its function is as follows. Probable ATP-binding RNA helicase. In Schizosaccharomyces pombe (strain 972 / ATCC 24843) (Fission yeast), this protein is Putative ATP-dependent RNA helicase ucp12 (ucp12).